Reading from the N-terminus, the 445-residue chain is Meiosis-specific serine/threonine-protein kinase mek1 (445 aa).

In terms of domain architecture, FHA spans 62 to 116 (VSVGRSNTCNYQLLQFTASYKHFRVYSVLIDDDMDPLVYCEDQSSNGTFLNHRLI). In terms of domain architecture, Protein kinase spans 160-421 (NITQRLLGIG…VKQCLSHPWF (262 aa)). Residues 166-174 (LGIGGFSRI) and lysine 189 contribute to the ATP site. The Proton acceptor role is filled by aspartate 281.

It belongs to the protein kinase superfamily. CAMK Ser/Thr protein kinase family. CHEK2 subfamily.

The enzyme catalyses L-seryl-[protein] + ATP = O-phospho-L-seryl-[protein] + ADP + H(+). It catalyses the reaction L-threonyl-[protein] + ATP = O-phospho-L-threonyl-[protein] + ADP + H(+). Probable protein kinase required for meiotic recombination. This chain is Meiosis-specific serine/threonine-protein kinase mek1 (mek1), found in Schizosaccharomyces pombe (strain 972 / ATCC 24843) (Fission yeast).